A 452-amino-acid polypeptide reads, in one-letter code: Tripartite motif-containing protein 49C (452 aa).

The RING-type zinc finger occupies 15–56 (CPLCMNYFIDPVTIDCGHSFCRPCFYLNWQDIPFLVQCSECT). Residues 88–129 (SEEQMCGTHRETKKIFCEVDRSLLCLLCSSSQEHRYHRHRPI) form a B box-type zinc finger. Positions 93, 96, 115, and 121 each coordinate Zn(2+). In terms of domain architecture, B30.2/SPRY spans 269 to 452 (ELSAGPITGL…LRPIFCCIHF (184 aa)).

The polypeptide is Tripartite motif-containing protein 49C (TRIM49C) (Homo sapiens (Human)).